An 80-amino-acid chain; its full sequence is Small ribosomal subunit protein uS17 (80 aa).

The protein belongs to the universal ribosomal protein uS17 family. As to quaternary structure, part of the 30S ribosomal subunit.

In terms of biological role, one of the primary rRNA binding proteins, it binds specifically to the 5'-end of 16S ribosomal RNA. In Cereibacter sphaeroides (strain ATCC 17029 / ATH 2.4.9) (Rhodobacter sphaeroides), this protein is Small ribosomal subunit protein uS17.